We begin with the raw amino-acid sequence, 152 residues long: Transcriptional repressor NrdR (152 aa).

A zinc finger spans residues 3 to 34 (CPYCNASETKVIDSRLAAEGAQVRRRRSCNSC). The 91-residue stretch at 49 to 139 (PRIIKSSGKI…VYRDFQDIDA (91 aa)) folds into the ATP-cone domain.

The protein belongs to the NrdR family. The cofactor is Zn(2+).

Negatively regulates transcription of bacterial ribonucleotide reductase nrd genes and operons by binding to NrdR-boxes. The sequence is that of Transcriptional repressor NrdR from Psychrobacter cryohalolentis (strain ATCC BAA-1226 / DSM 17306 / VKM B-2378 / K5).